The following is a 245-amino-acid chain: Acetylglutamate kinase (245 aa).

Residues Gly41–Gly42, Arg63, and Asn156 each bind substrate.

Belongs to the acetylglutamate kinase family. ArgB subfamily.

It localises to the cytoplasm. It carries out the reaction N-acetyl-L-glutamate + ATP = N-acetyl-L-glutamyl 5-phosphate + ADP. Its pathway is amino-acid biosynthesis; L-arginine biosynthesis; N(2)-acetyl-L-ornithine from L-glutamate: step 2/4. Catalyzes the ATP-dependent phosphorylation of N-acetyl-L-glutamate. This is Acetylglutamate kinase from Streptococcus mutans serotype c (strain ATCC 700610 / UA159).